The sequence spans 52 residues: Disintegrin multisquamatin (52 aa).

A Disintegrin domain is found at 1–50 (EGEECESGPCCRNCKFLKEGTICKRARGDDMDDYCNGKTCDCPRNPHKGP). Cystine bridges form between C5–C14, C10–C35, C11–C40, and C23–C42. Positions 27-29 (RGD) match the Cell attachment site motif.

It belongs to the venom metalloproteinase (M12B) family. P-II subfamily. P-IIa sub-subfamily. As to quaternary structure, monomer. Expressed by the venom gland.

The protein resides in the secreted. In terms of biological role, inhibits ADP-induced human, canine and rabbit platelet aggregation by binding with high affinity to alpha-IIb/beta-3 (ITGA2B/ITGB3). The chain is Disintegrin multisquamatin from Echis multisquamatus (Central Asian sand viper).